A 447-amino-acid chain; its full sequence is Folate synthesis bifunctional protein (447 aa).

Positions methionine 1–proline 165 are HPPK. A Pterin-binding domain is found at threonine 179 to serine 438. Residues leucine 181–valine 447 are DHPS. Residue asparagine 186 coordinates Mg(2+). (7,8-dihydropterin-6-yl)methyl diphosphate is bound by residues threonine 226, aspartate 266, asparagine 286, aspartate 356, lysine 392, and arginine 426–histidine 428.

The protein in the C-terminal section; belongs to the DHPS family. This sequence in the N-terminal section; belongs to the HPPK family. Mg(2+) is required as a cofactor.

It carries out the reaction 6-hydroxymethyl-7,8-dihydropterin + ATP = (7,8-dihydropterin-6-yl)methyl diphosphate + AMP + H(+). The catalysed reaction is (7,8-dihydropterin-6-yl)methyl diphosphate + 4-aminobenzoate = 7,8-dihydropteroate + diphosphate. It functions in the pathway cofactor biosynthesis; tetrahydrofolate biosynthesis; 2-amino-4-hydroxy-6-hydroxymethyl-7,8-dihydropteridine diphosphate from 7,8-dihydroneopterin triphosphate: step 4/4. The protein operates within cofactor biosynthesis; tetrahydrofolate biosynthesis; 7,8-dihydrofolate from 2-amino-4-hydroxy-6-hydroxymethyl-7,8-dihydropteridine diphosphate and 4-aminobenzoate: step 1/2. This chain is Folate synthesis bifunctional protein (folKP), found in Chlamydia caviae (strain ATCC VR-813 / DSM 19441 / 03DC25 / GPIC) (Chlamydophila caviae).